A 126-amino-acid polypeptide reads, in one-letter code: Large ribosomal subunit protein bL12 (126 aa).

It belongs to the bacterial ribosomal protein bL12 family. In terms of assembly, homodimer. Part of the ribosomal stalk of the 50S ribosomal subunit. Forms a multimeric L10(L12)X complex, where L10 forms an elongated spine to which 2 to 4 L12 dimers bind in a sequential fashion. Binds GTP-bound translation factors.

Its function is as follows. Forms part of the ribosomal stalk which helps the ribosome interact with GTP-bound translation factors. Is thus essential for accurate translation. This chain is Large ribosomal subunit protein bL12, found in Coxiella burnetii (strain CbuK_Q154) (Coxiella burnetii (strain Q154)).